A 209-amino-acid polypeptide reads, in one-letter code: Uracil phosphoribosyltransferase (209 aa).

5-phospho-alpha-D-ribose 1-diphosphate contacts are provided by residues arginine 79, arginine 104, and 131–139 (DPMLATGGS). Residues isoleucine 194 and 199-201 (GDA) each bind uracil. Aspartate 200 is a 5-phospho-alpha-D-ribose 1-diphosphate binding site.

This sequence belongs to the UPRTase family. It depends on Mg(2+) as a cofactor.

It carries out the reaction UMP + diphosphate = 5-phospho-alpha-D-ribose 1-diphosphate + uracil. It participates in pyrimidine metabolism; UMP biosynthesis via salvage pathway; UMP from uracil: step 1/1. With respect to regulation, allosterically activated by GTP. Its function is as follows. Catalyzes the conversion of uracil and 5-phospho-alpha-D-ribose 1-diphosphate (PRPP) to UMP and diphosphate. The sequence is that of Uracil phosphoribosyltransferase from Bacillus pumilus (strain SAFR-032).